Here is a 345-residue protein sequence, read N- to C-terminus: NADH-ubiquinone oxidoreductase chain 2 (345 aa).

10 consecutive transmembrane segments (helical) span residues 1 to 21 (MNPITLAIIYFTIFLGPVITM), 25 to 45 (NLMLMWVGLEFSLLAIIPMLI), 56 to 76 (ATKYFVTQATASMIILLAIVL), 92 to 114 (GLILNMTLMALSMKLGLAPFHFW), 149 to 171 (LNSTIILMLAITSIFMGAWGGLN), 178 to 198 (IMAYSSIAHMGWMLAILPYNP), 200 to 220 (LTLLNLMIYIILTAPMFMALM), 241 to 261 (LTMISLMLLSLGGLPPLTGFL), 274 to 294 (NCLIMATLMAMMALLNLFFYT), and 324 to 344 (LMFSTLAIMSTMTLPLAPQLI).

The protein belongs to the complex I subunit 2 family. As to quaternary structure, core subunit of respiratory chain NADH dehydrogenase (Complex I) which is composed of 45 different subunits. Interacts with TMEM242.

Its subcellular location is the mitochondrion inner membrane. It catalyses the reaction a ubiquinone + NADH + 5 H(+)(in) = a ubiquinol + NAD(+) + 4 H(+)(out). Its function is as follows. Core subunit of the mitochondrial membrane respiratory chain NADH dehydrogenase (Complex I) which catalyzes electron transfer from NADH through the respiratory chain, using ubiquinone as an electron acceptor. Essential for the catalytic activity and assembly of complex I. The chain is NADH-ubiquinone oxidoreductase chain 2 from Mus musculus (Mouse).